The primary structure comprises 79 residues: Omega-phylotoxin-To1a (79 aa).

Residues 1–21 (MKKTFCFILILVCIVLKSVNA) form the signal peptide. Residues 22–38 (EEEDNFEESSLEMETAR) constitute a propeptide that is removed on maturation. 4 disulfides stabilise this stretch: Cys39/Cys59, Cys46/Cys63, Cys58/Cys78, and Cys65/Cys76.

In terms of tissue distribution, expressed by the venom duct.

The protein localises to the secreted. Insect-specific toxin that probably acts as an inhibitor of presynaptic insect calcium channels, presumably Cav2 subtype. In vivo, induces immediate paralysis on insects, followed by death when high doses are injected. The sequence is that of Omega-phylotoxin-To1a from Tibellus oblongus (Oblong running crab spider).